A 654-amino-acid polypeptide reads, in one-letter code: MSSIESVLTETRVFAPHETFRQAATVSGLPGYQALCDAAEQDYTGFWANLARQEISWQTPFTEVLDESNAPFYRWFADGKLNASYNCIDRHLEKRANKIALIFEADNGDVANITYRELHQRVCRFANALKKQGVGLGDRVIIYLPMSIEAIVAMQACARIGAIHSVVFGGFSAKSLHERIVDVGAKLVITADAGIRGGKQVALKASVDEALELGGCESVEKVIVYQRTGVDIAWNPHRDAWWHEVEAAENDNCEPVWVDAEHPLFILYTSGSTGTPKGVQHSTGGYLLGAIMSMKWVFDHKATDIFWCTADVGWITGHSYVAYGPLALGSTQVVFEGVPTYPDAGRFWQMIERHKVSIFYTAPTAIRSLIKLGGDLPHKYDLSSLRLLGTVGEPINPEAWMWYYKVVGKERCPIADTWWQTETGAHMIAPLPGAIDLKPGSCTRPLPGIIMDIVEEDGTHIEGTGGGLLVVKKPWPSMIRNIWGNPERFRKAYFPEELNGLYLAGDSAHRDEDGYFWIMGRIDDVLNVSGHRLGTMEIESALVANPLVAEAAIVGKPHDIKGESIVAYVVLKGERPEGEAAKTIAGQLREWVGKEIGPIAKPDEIRFGENLPKTRSGKIMRRLLRSLAKGEEITSDISTLDNPAILDQLRQSAG.

CoA-binding positions include Arg196 to Lys199 and Thr316. Residues Gly392–Pro394, Asp416–Thr421, Asp506, and Arg521 contribute to the ATP site. Residue Ser529 coordinates CoA. Arg532 contacts ATP. The Mg(2+) site is built by Val543 and Val548. Lys618 carries the post-translational modification N6-acetyllysine.

Belongs to the ATP-dependent AMP-binding enzyme family. It depends on Mg(2+) as a cofactor. Post-translationally, acetylated. Deacetylation by the SIR2-homolog deacetylase activates the enzyme.

The catalysed reaction is acetate + ATP + CoA = acetyl-CoA + AMP + diphosphate. Functionally, catalyzes the conversion of acetate into acetyl-CoA (AcCoA), an essential intermediate at the junction of anabolic and catabolic pathways. AcsA undergoes a two-step reaction. In the first half reaction, AcsA combines acetate with ATP to form acetyl-adenylate (AcAMP) intermediate. In the second half reaction, it can then transfer the acetyl group from AcAMP to the sulfhydryl group of CoA, forming the product AcCoA. In Methylobacillus flagellatus (strain ATCC 51484 / DSM 6875 / VKM B-1610 / KT), this protein is Acetyl-coenzyme A synthetase.